A 1131-amino-acid chain; its full sequence is DNA polymerase II large subunit (1131 aa).

It belongs to the archaeal DNA polymerase II family. As to quaternary structure, heterodimer of a large subunit and a small subunit.

It carries out the reaction DNA(n) + a 2'-deoxyribonucleoside 5'-triphosphate = DNA(n+1) + diphosphate. The catalysed reaction is Exonucleolytic cleavage in the 3'- to 5'-direction to yield nucleoside 5'-phosphates.. Its function is as follows. Possesses two activities: a DNA synthesis (polymerase) and an exonucleolytic activity that degrades single-stranded DNA in the 3'- to 5'-direction. Has a template-primer preference which is characteristic of a replicative DNA polymerase. This Methanococcus maripaludis (strain C5 / ATCC BAA-1333) protein is DNA polymerase II large subunit.